The sequence spans 122 residues: Small ribosomal subunit protein uS13 (122 aa).

Residues 93–122 (RLSLPVRGQRTKTNSRTRKGKRKTVAGKKK) are disordered. Basic residues predominate over residues 101–122 (QRTKTNSRTRKGKRKTVAGKKK).

Belongs to the universal ribosomal protein uS13 family. Part of the 30S ribosomal subunit. Forms a loose heterodimer with protein S19. Forms two bridges to the 50S subunit in the 70S ribosome.

In terms of biological role, located at the top of the head of the 30S subunit, it contacts several helices of the 16S rRNA. In the 70S ribosome it contacts the 23S rRNA (bridge B1a) and protein L5 of the 50S subunit (bridge B1b), connecting the 2 subunits; these bridges are implicated in subunit movement. Contacts the tRNAs in the A and P-sites. The chain is Small ribosomal subunit protein uS13 from Chlamydia caviae (strain ATCC VR-813 / DSM 19441 / 03DC25 / GPIC) (Chlamydophila caviae).